The chain runs to 89 residues: Small ribosomal subunit protein uS14A (89 aa).

The protein belongs to the universal ribosomal protein uS14 family. As to quaternary structure, part of the 30S ribosomal subunit. Contacts proteins S3 and S10.

Binds 16S rRNA, required for the assembly of 30S particles and may also be responsible for determining the conformation of the 16S rRNA at the A site. The chain is Small ribosomal subunit protein uS14A from Bacillus licheniformis (strain ATCC 14580 / DSM 13 / JCM 2505 / CCUG 7422 / NBRC 12200 / NCIMB 9375 / NCTC 10341 / NRRL NRS-1264 / Gibson 46).